The following is a 734-amino-acid chain: Predicted GPI-anchored protein 49 (734 aa).

The first 16 residues, 1–16 (MNYITSLLLLSSNTFL), serve as a signal peptide directing secretion. N-linked (GlcNAc...) asparagine glycans are attached at residues asparagine 27, asparagine 56, asparagine 68, and asparagine 71. The segment at 78-145 (DNSDTDIDDS…NESDTQNEND (68 aa)) is disordered. A compositionally biased stretch (low complexity) spans 87 to 98 (SSSNSEDVSSND). N-linked (GlcNAc...) asparagine glycans are attached at residues asparagine 105, asparagine 118, asparagine 136, and asparagine 180. Residues 110 to 129 (FSDESDEGNDSDDNGDEVEN) show a composition bias toward acidic residues. A compositionally biased stretch (polar residues) spans 130–141 (MENNQANESDTQ). Disordered regions lie at residues 216–262 (SPKS…LKSK) and 331–360 (DANP…RLPT). Positions 228–259 (SRKKTLKSKSKSKSSKLKHKSRKSHKRRPKLL) are enriched in basic residues. Residues asparagine 388 and asparagine 427 are each glycosylated (N-linked (GlcNAc...) asparagine). Residues 447–479 (PPRYSNHHSEFTVERPPRPSRTKKRPRIKAKKT) are disordered. Residues 453–463 (HHSEFTVERPP) show a composition bias toward basic and acidic residues. Positions 464 to 479 (RPSRTKKRPRIKAKKT) are enriched in basic residues. N-linked (GlcNAc...) asparagine glycosylation occurs at asparagine 517. Residues 582 to 653 (KPQETKLHSP…STTSTKPNDQ (72 aa)) are disordered. Positions 592–611 (TSTDTKSSKLMSSSSSNNNK) are enriched in low complexity. A compositionally biased stretch (polar residues) spans 620 to 631 (EYNQTQESTSYN). Asparagine 622 and asparagine 631 each carry an N-linked (GlcNAc...) asparagine glycan. Residues 632-650 (TTKAVPKTSVVSSTTSTKP) are compositionally biased toward low complexity. Residue serine 707 is the site of GPI-anchor amidated serine attachment. The propeptide at 708–734 (ASQNLSFSVLGLIILLLLLPGLLIIIM) is removed in mature form. The N-linked (GlcNAc...) asparagine glycan is linked to asparagine 711.

It localises to the cell membrane. In Candida albicans (strain SC5314 / ATCC MYA-2876) (Yeast), this protein is Predicted GPI-anchored protein 49 (PGA49).